The chain runs to 241 residues: Ribonuclease 3 (241 aa).

The 130-residue stretch at 8–137 (LTLLKNRLGI…LLGAVYLDQG (130 aa)) folds into the RNase III domain. Position 50 (glutamate 50) interacts with Mg(2+). The active site involves aspartate 54. Positions 123 and 126 each coordinate Mg(2+). Glutamate 126 is a catalytic residue. The region spanning 164 to 233 (DYKTELQELV…AKKALMKSDL (70 aa)) is the DRBM domain. The tract at residues 214-241 (RSKKEAEQQAAKKALMKSDLGSACNHKK) is disordered.

This sequence belongs to the ribonuclease III family. As to quaternary structure, homodimer. The cofactor is Mg(2+).

Its subcellular location is the cytoplasm. The enzyme catalyses Endonucleolytic cleavage to 5'-phosphomonoester.. In terms of biological role, digests double-stranded RNA. Involved in the processing of primary rRNA transcript to yield the immediate precursors to the large and small rRNAs (23S and 16S). Processes some mRNAs, and tRNAs when they are encoded in the rRNA operon. Processes pre-crRNA and tracrRNA of type II CRISPR loci if present in the organism. This Pelotomaculum thermopropionicum (strain DSM 13744 / JCM 10971 / SI) protein is Ribonuclease 3.